A 283-amino-acid polypeptide reads, in one-letter code: Protease HtpX (283 aa).

2 helical membrane-spanning segments follow: residues 4 to 24 (ILLFLATNMAVMLVLGIILSV) and 33 to 53 (GGILIMALLFGFAGSLISLFL). Position 139 (His139) interacts with Zn(2+). The active site involves Glu140. His143 contributes to the Zn(2+) binding site. 2 helical membrane passes run 147-167 (GDMVTMALLQGVLNTFVIFLS) and 190-210 (IYFLVSMVLEMLFGVLASIIA). A Zn(2+)-binding site is contributed by Glu218.

It belongs to the peptidase M48B family. Zn(2+) is required as a cofactor.

The protein resides in the cell inner membrane. In Haemophilus influenzae (strain PittEE), this protein is Protease HtpX.